We begin with the raw amino-acid sequence, 362 residues long: RING-H2 finger protein ATL52 (362 aa).

The helical transmembrane segment at 58-78 (LIALIGILTSALILVSYYTLI) threads the bilayer. The RING-type; atypical zinc-finger motif lies at 142-184 (CSVCLSEFEENESLRLLPKCNHAFHLPCIDTWLKSHSNCPLCR). Disordered stretches follow at residues 252–271 (DARSELQLPEERRETKDEDS) and 296–333 (EDEEGESGGVGTSQRREEGEDGDGKTIPPTEANQRSGG). A compositionally biased stretch (basic and acidic residues) spans 309-319 (QRREEGEDGDG).

This sequence belongs to the RING-type zinc finger family. ATL subfamily. Expressed in flowers.

It is found in the membrane. The catalysed reaction is S-ubiquitinyl-[E2 ubiquitin-conjugating enzyme]-L-cysteine + [acceptor protein]-L-lysine = [E2 ubiquitin-conjugating enzyme]-L-cysteine + N(6)-ubiquitinyl-[acceptor protein]-L-lysine.. The protein operates within protein modification; protein ubiquitination. In Arabidopsis thaliana (Mouse-ear cress), this protein is RING-H2 finger protein ATL52 (ATL52).